The following is a 530-amino-acid chain: UDP-glucuronosyltransferase 1A8 (530 aa).

The signal sequence occupies residues 1–25 (MARTGWTSPIPLCVSLLLTCGFAEA). Asparagine 71, asparagine 292, and asparagine 344 each carry an N-linked (GlcNAc...) asparagine glycan. A helical transmembrane segment spans residues 488–504 (VIGFLLAVVLTVAFITF).

This sequence belongs to the UDP-glycosyltransferase family. As to quaternary structure, homodimer. Homooligomer. Interacts with UGT1A1, UGT1A3, UGT1A4, UGT1A6, UGT1A7, UGT1A9 and UGT1A10 to form heterodimers. Isoform 1 interacts with isoform 2/i2 suggesting that oligomerization is involved in negative regulation of transferase activity by isoform 2. Isoform 1 also interacts with respective i2 isoforms of UGT1A1, UGT1A3, UGT1A4, UGT1A6, UGT1A7, UGT1A9 and UGT1A10. As to expression, expressed in kidney, colon and small intestine. Not expressed in liver. In terms of tissue distribution, expressed in liver, kidney, colon and small intestine.

Its subcellular location is the endoplasmic reticulum membrane. The catalysed reaction is glucuronate acceptor + UDP-alpha-D-glucuronate = acceptor beta-D-glucuronoside + UDP + H(+). It catalyses the reaction 17beta-estradiol + UDP-alpha-D-glucuronate = 17beta-estradiol 3-O-(beta-D-glucuronate) + UDP + H(+). It carries out the reaction 17alpha-estradiol + UDP-alpha-D-glucuronate = 17alpha-estradiol 3-O-(beta-D-glucuronate) + UDP + H(+). The enzyme catalyses estrone + UDP-alpha-D-glucuronate = estrone 3-O-(beta-D-glucuronate) + UDP + H(+). The catalysed reaction is 16alpha,17alpha-estriol + UDP-alpha-D-glucuronate = 16alpha,17alpha-estriol 3-O-(beta-D-glucuronate) + UDP + H(+). It catalyses the reaction 2-hydroxy-17beta-estradiol + UDP-alpha-D-glucuronate = 2-hydroxy-17beta-estradiol 3-O-(beta-D-glucuronate) + UDP + H(+). It carries out the reaction 2-hydroxy-17beta-estradiol + UDP-alpha-D-glucuronate = 17beta-estradiol 2-O-(beta-D-glucuronate) + UDP + H(+). The enzyme catalyses 2-hydroxyestrone + UDP-alpha-D-glucuronate = 2-hydroxyestrone 3-O-(beta-D-glucuronate) + UDP + H(+). The catalysed reaction is 4-hydroxy-17beta-estradiol + UDP-alpha-D-glucuronate = 4-hydroxy-17beta-estradiol 3-O-(beta-D-glucuronate) + UDP + H(+). It catalyses the reaction 4-hydroxy-17beta-estradiol + UDP-alpha-D-glucuronate = 17beta-estradiol 4-O-(beta-D-glucuronate) + UDP + H(+). It carries out the reaction 4-hydroxyestrone + UDP-alpha-D-glucuronate = 4-hydroxyestrone 3-O-(beta-D-glucuronate) + UDP + H(+). The enzyme catalyses 4-hydroxyestrone + UDP-alpha-D-glucuronate = estrone 4-O-(beta-D-glucuronate) + UDP + H(+). The catalysed reaction is 2-methoxy-17beta-estradiol + UDP-alpha-D-glucuronate = 2-methoxy-17beta-estradiol 3-O-(beta-D-glucuronate) + UDP + H(+). It catalyses the reaction 2-methoxyestrone + UDP-alpha-D-glucuronate = 2-methoxyestrone 3-O-(beta-D-glucuronate) + UDP + H(+). It carries out the reaction 4-methoxy-17beta-estradiol + UDP-alpha-D-glucuronate = 4-methoxy-17beta-estradiol 3-O-(beta-D-glucuronate) + UDP + H(+). The enzyme catalyses 4-methoxyestrone + UDP-alpha-D-glucuronate = 4-methoxyestrone 3-O-(beta-D-glucuronate) + UDP + H(+). The catalysed reaction is 17beta-hydroxy-5alpha-androstan-3-one + UDP-alpha-D-glucuronate = 5alpha-dihydrotestosterone 17-O-(beta-D-glucuronate) + UDP + H(+). It catalyses the reaction 5alpha-dihydrotestosterone 17-O-(beta-D-glucuronate) + UDP-alpha-D-glucuronate = 5alpha-dihydrotestosterone 17-O-[beta-D-glucuronosyl-(1-&gt;2)-glucuronate] + UDP + H(+). It carries out the reaction prunetin + UDP-alpha-D-glucuronate = prunetin-4'-O-beta-D-glucuronide + UDP. The enzyme catalyses prunetin + UDP-alpha-D-glucuronate = prunetin-5-O-beta-D-glucuronide + UDP. The catalysed reaction is candesartan + UDP-alpha-D-glucuronate = candesartan O-beta-D-glucuronoside + UDP. It catalyses the reaction mycophenolate + UDP-alpha-D-glucuronate = mycophenolate 7-O-beta-D-glucuronide + UDP + H(+). It carries out the reaction (E)-ferulate + UDP-alpha-D-glucuronate = (E)-4-O-(beta-D-glucuronosyl)-ferulate + UDP + H(+). The enzyme catalyses (E)-ferulate + UDP-alpha-D-glucuronate = (E)-ferulic acid beta-D-glucuronate ester + UDP. Its function is as follows. UDP-glucuronosyltransferase (UGT) that catalyzes phase II biotransformation reactions in which lipophilic substrates are conjugated with glucuronic acid to increase the metabolite's water solubility, thereby facilitating excretion into either the urine or bile. Essential for the elimination and detoxification of drugs, xenobiotics and endogenous compounds. Catalyzes the glucuronidation of endogenous steroid hormones such as androgens and estrogens. Produces dihydrotestosterone (DHT) diglucuronide from the DHT after two subsequent glucoronidation steps. Involved in the glucuronidation of the phytochemical ferulic acid at the phenolic or the carboxylic acid group. Also catalyzes the glucuronidation of the isoflavones genistein, daidzein, glycitein, formononetin, biochanin A and prunetin, which are phytoestrogens with anticancer and cardiovascular properties. Involved in the glucuronidation of the AGTR1 angiotensin receptor antagonist caderastan, a drug which can inhibit the effect of angiotensin II. Also metabolizes mycophenolate, an immunosuppressive agent. Lacks UGT glucuronidation activity but acts as a negative regulator of isoform 1. The protein is UDP-glucuronosyltransferase 1A8 of Homo sapiens (Human).